The sequence spans 108 residues: MAEEFVQQRLTNNKVTIFVKFTCPFCRNALDILNKFSFKRGAYEIVDIKEFKPENKLHDYFEQITGGRTVPRIFFGKTSIGGYSDLLEIDNMDALGDILSSIGVLRTC.

The Glutaredoxin domain maps to 3–106 (EEFVQQRLTN…DILSSIGVLR (104 aa)). An intrachain disulfide couples Cys23 to Cys26.

It belongs to the glutaredoxin family.

The protein localises to the virion. Functionally, displays thioltransferase and dehydroascorbate reductase activities. This Variola virus (isolate Human/India/Ind3/1967) (VARV) protein is Glutaredoxin-1 (OPG075).